Here is a 756-residue protein sequence, read N- to C-terminus: ATP-dependent 6-phosphofructokinase 2 (756 aa).

The tract at residues 1-393 (MEQKFKKGKD…KQTYLNFVSI (393 aa)) is N-terminal catalytic PFK domain 1. Residues Gly-20, 81–82 (RC), and 111–114 (GDGS) each bind ATP. Asp-112 is a Mg(2+) binding site. Substrate is bound by residues 157-159 (SID), Arg-194, 201-203 (MGR), Glu-257, Arg-285, and 291-294 (HLQR). The active-site Proton acceptor is the Asp-159. The interdomain linker stretch occupies residues 394–404 (PLSTTMPSRTK). Residues 405–756 (TFAVVHIGSP…KKPQEAVLSS (352 aa)) form a C-terminal regulatory PFK domain 2 region. Beta-D-fructose 2,6-bisphosphate contacts are provided by residues Arg-474, 530–534 (TISNN), 575–577 (MGS), Glu-632, Arg-658, and 664–667 (YSQL).

This sequence belongs to the phosphofructokinase type A (PFKA) family. ATP-dependent PFK group I subfamily. Eukaryotic two domain clade 'E' sub-subfamily. In terms of assembly, homotetramer. Mg(2+) is required as a cofactor.

It is found in the cytoplasm. It catalyses the reaction beta-D-fructose 6-phosphate + ATP = beta-D-fructose 1,6-bisphosphate + ADP + H(+). It functions in the pathway carbohydrate degradation; glycolysis; D-glyceraldehyde 3-phosphate and glycerone phosphate from D-glucose: step 3/4. With respect to regulation, allosterically activated by ADP, AMP, or fructose 2,6-bisphosphate, and allosterically inhibited by ATP or citrate. Its function is as follows. Catalyzes the phosphorylation of D-fructose 6-phosphate to fructose 1,6-bisphosphate by ATP, the first committing step of glycolysis. This chain is ATP-dependent 6-phosphofructokinase 2, found in Caenorhabditis elegans.